The primary structure comprises 156 residues: Putative NrdI-like protein (156 aa).

Belongs to the NrdI family.

The protein is Putative NrdI-like protein of Streptococcus pneumoniae serotype 4 (strain ATCC BAA-334 / TIGR4).